The following is a 298-amino-acid chain: MKHYLITGGTGMIGSQLVKAIIQSDAHITILTRQDMTSSHPKISYVNWSQPNWENEIPDIDIVINLAGASLNKRWTKSYKQTIMLSRIQATQALFELFQNRKHKPEVLFNASAVGYYKPDLYRTYTELYKTLPFDFLSEVVYQWERMARQFETLGTRVVIGRFGMVLSNDGGALPMMKLPYDFYLGGKLGSGRQWYSWIHIDDLVRALLHTINTESARGVFNFTAPIVEHQNMFGYTLARVSHRPHHTWVPSLAIRLALGQMSTVVLDTQKVIPNKLQATHFKFKYPDLKIALEDLVH.

The protein belongs to the NAD(P)-dependent epimerase/dehydratase family. SDR39U1 subfamily.

The sequence is that of Epimerase family protein SSP1921 from Staphylococcus saprophyticus subsp. saprophyticus (strain ATCC 15305 / DSM 20229 / NCIMB 8711 / NCTC 7292 / S-41).